Consider the following 359-residue polypeptide: Guanine nucleotide-binding protein alpha-4 subunit (359 aa).

The N-myristoyl glycine moiety is linked to residue G2. C3 carries S-palmitoyl cysteine lipidation. A G-alpha domain is found at 31-359; the sequence is TEVKLLLLGA…RYNLKDCGLF (329 aa). Positions 34–47 are G1 motif; it reads KLLLLGAGESGKST. GTP is bound by residues 39–46, 178–184, 203–207, 272–275, and A331; these read GAGESGKS, LRARVKS, DVGGQ, and NKMD. S46 is a binding site for Mg(2+). Residues 176-184 form a G2 motif region; it reads DILRARVKS. A G3 motif region spans residues 199–208; sequence FRMFDVGGQR. The tract at residues 268–275 is G4 motif; it reads ILFLNKMD. Residues 329 to 334 form a G5 motif region; sequence TCATDT.

Belongs to the G-alpha family. G(i/o/t/z) subfamily. G proteins are composed of 3 units; alpha, beta and gamma. The alpha chain contains the guanine nucleotide binding site.

Guanine nucleotide-binding proteins (G proteins) are involved as modulators or transducers in various transmembrane signaling systems. The sequence is that of Guanine nucleotide-binding protein alpha-4 subunit (gpa-4) from Caenorhabditis briggsae.